A 244-amino-acid chain; its full sequence is Ethylene-responsive transcription factor ERF013 (244 aa).

The disordered stretch occupies residues 1–33 (MVKQELKIQVTTSSSSLSHSSSSSSSSTSALRH). Low complexity predominate over residues 11 to 29 (TTSSSSLSHSSSSSSSSTS). Residues 42–99 (KYKGVRMRSWGSWVTEIRAPNQKTRIWLGSYSTAEAAARAYDAALLCLKGPKANLNFP) constitute a DNA-binding region (AP2/ERF). The segment at 123–178 (QKVAAQAANSSSDHFTPPSDENDHDHDDGLDHHPSASSSAASSPPDDDHHNDDDGD) is disordered. Over residues 143–156 (ENDHDHDDGLDHHP) the composition is skewed to basic and acidic residues. The span at 157-166 (SASSSAASSP) shows a compositional bias: low complexity.

The protein belongs to the AP2/ERF transcription factor family. ERF subfamily.

Its subcellular location is the nucleus. Functionally, probably acts as a transcriptional activator. Binds to the GCC-box pathogenesis-related promoter element. May be involved in the regulation of gene expression by stress factors and by components of stress signal transduction pathways. This chain is Ethylene-responsive transcription factor ERF013 (ERF013), found in Arabidopsis thaliana (Mouse-ear cress).